Consider the following 337-residue polypeptide: Adenosine deaminase (337 aa).

Residues His-12 and His-14 each coordinate Zn(2+). The substrate site is built by His-14, Asp-16, and Gly-170. His-197 is a binding site for Zn(2+). The active-site Proton donor is Glu-200. Asp-278 provides a ligand contact to Zn(2+). Asp-279 is a binding site for substrate.

This sequence belongs to the metallo-dependent hydrolases superfamily. Adenosine and AMP deaminases family. Adenosine deaminase subfamily. Zn(2+) is required as a cofactor.

It catalyses the reaction adenosine + H2O + H(+) = inosine + NH4(+). The enzyme catalyses 2'-deoxyadenosine + H2O + H(+) = 2'-deoxyinosine + NH4(+). In terms of biological role, catalyzes the hydrolytic deamination of adenosine and 2-deoxyadenosine. The protein is Adenosine deaminase of Pectobacterium atrosepticum (strain SCRI 1043 / ATCC BAA-672) (Erwinia carotovora subsp. atroseptica).